The chain runs to 219 residues: Cytidylate kinase (219 aa).

21 to 29 is a binding site for ATP; it reads GPAASGKGT.

It belongs to the cytidylate kinase family. Type 1 subfamily.

Its subcellular location is the cytoplasm. It carries out the reaction CMP + ATP = CDP + ADP. It catalyses the reaction dCMP + ATP = dCDP + ADP. This Rickettsia prowazekii (strain Madrid E) protein is Cytidylate kinase.